A 96-amino-acid chain; its full sequence is HIG1 domain family member 1C (96 aa).

Residues Met-1–Pro-26 lie on the Cytoplasmic side of the membrane. The region spanning Met-1–Phe-91 is the HIG1 domain. The chain crosses the membrane as a helical span at residues Phe-27–Tyr-44. The Extracellular segment spans residues Lys-45–Leu-58. Residues Ile-59–Met-81 form a helical membrane-spanning segment. Over Tyr-82–Lys-96 the chain is Cytoplasmic.

It is found in the membrane. The polypeptide is HIG1 domain family member 1C (Higd1c) (Mus musculus (Mouse)).